We begin with the raw amino-acid sequence, 471 residues long: Putative pentatricopeptide repeat-containing protein At1g53330 (471 aa).

PPR repeat units lie at residues 46–81, 82–116, 117–147, 151–185, 186–221, 222–256, 257–291, 292–326, 327–361, and 362–396; these read SLLC…RIVP, TEII…RCQR, TVKS…IDEF, DACT…KVKP, TGVT…GVRP, TVHI…KIKV, DAAI…GCKP, DTVT…GLKP, DVIS…GCSP, and DTLS…GYKP.

This sequence belongs to the PPR family. P subfamily.

Functionally, involved during embryo development. The sequence is that of Putative pentatricopeptide repeat-containing protein At1g53330 from Arabidopsis thaliana (Mouse-ear cress).